The chain runs to 72 residues: High-potential iron-sulfur protein isozyme 1 (72 aa).

Residues Cys-34, Cys-37, Cys-51, and Cys-65 each coordinate [4Fe-4S] cluster.

It belongs to the high-potential iron-sulfur protein (HiPIP) family. As to quaternary structure, homodimer.

Functionally, specific class of high-redox-potential 4Fe-4S ferredoxins. Functions in anaerobic electron transport in most purple and in some other photosynthetic bacteria and in at least one genus (Paracoccus) of halophilic, denitrifying bacteria. This Ectothiorhodospira shaposhnikovii (Ectothiorhodospira vacuolata) protein is High-potential iron-sulfur protein isozyme 1 (hip1).